The following is a 190-amino-acid chain: Imidazoleglycerol-phosphate dehydratase (190 aa).

The protein belongs to the imidazoleglycerol-phosphate dehydratase family.

It localises to the cytoplasm. It carries out the reaction D-erythro-1-(imidazol-4-yl)glycerol 3-phosphate = 3-(imidazol-4-yl)-2-oxopropyl phosphate + H2O. It participates in amino-acid biosynthesis; L-histidine biosynthesis; L-histidine from 5-phospho-alpha-D-ribose 1-diphosphate: step 6/9. The sequence is that of Imidazoleglycerol-phosphate dehydratase from Methanococcus maripaludis (strain DSM 14266 / JCM 13030 / NBRC 101832 / S2 / LL).